The chain runs to 559 residues: Methionine--tRNA ligase (559 aa).

Residues 10–20 carry the 'HIGH' region motif; that stretch reads PYINAVPHLGT. The Zn(2+) site is built by Cys141, Cys144, Cys154, and Cys157. Positions 331 to 335 match the 'KMSKS' region motif; it reads KFSKS. Residue Lys334 coordinates ATP.

This sequence belongs to the class-I aminoacyl-tRNA synthetase family. MetG type 1 subfamily. Requires Zn(2+) as cofactor.

The protein localises to the cytoplasm. The catalysed reaction is tRNA(Met) + L-methionine + ATP = L-methionyl-tRNA(Met) + AMP + diphosphate. Functionally, is required not only for elongation of protein synthesis but also for the initiation of all mRNA translation through initiator tRNA(fMet) aminoacylation. The protein is Methionine--tRNA ligase of Korarchaeum cryptofilum (strain OPF8).